Reading from the N-terminus, the 571-residue chain is Proline--tRNA ligase (571 aa).

It belongs to the class-II aminoacyl-tRNA synthetase family. ProS type 1 subfamily. Homodimer.

The protein localises to the cytoplasm. It carries out the reaction tRNA(Pro) + L-proline + ATP = L-prolyl-tRNA(Pro) + AMP + diphosphate. Functionally, catalyzes the attachment of proline to tRNA(Pro) in a two-step reaction: proline is first activated by ATP to form Pro-AMP and then transferred to the acceptor end of tRNA(Pro). As ProRS can inadvertently accommodate and process non-cognate amino acids such as alanine and cysteine, to avoid such errors it has two additional distinct editing activities against alanine. One activity is designated as 'pretransfer' editing and involves the tRNA(Pro)-independent hydrolysis of activated Ala-AMP. The other activity is designated 'posttransfer' editing and involves deacylation of mischarged Ala-tRNA(Pro). The misacylated Cys-tRNA(Pro) is not edited by ProRS. The chain is Proline--tRNA ligase from Shewanella frigidimarina (strain NCIMB 400).